We begin with the raw amino-acid sequence, 341 residues long: tRNA N6-adenosine threonylcarbamoyltransferase (341 aa).

Positions 111 and 115 each coordinate Fe cation. Substrate-binding positions include 134-138 (LVSGG), Asp167, Gly180, and Asn276. Asp304 contacts Fe cation.

The protein belongs to the KAE1 / TsaD family. Fe(2+) serves as cofactor.

Its subcellular location is the cytoplasm. It carries out the reaction L-threonylcarbamoyladenylate + adenosine(37) in tRNA = N(6)-L-threonylcarbamoyladenosine(37) in tRNA + AMP + H(+). Its function is as follows. Required for the formation of a threonylcarbamoyl group on adenosine at position 37 (t(6)A37) in tRNAs that read codons beginning with adenine. Is involved in the transfer of the threonylcarbamoyl moiety of threonylcarbamoyl-AMP (TC-AMP) to the N6 group of A37, together with TsaE and TsaB. TsaD likely plays a direct catalytic role in this reaction. This is tRNA N6-adenosine threonylcarbamoyltransferase from Pseudomonas aeruginosa (strain ATCC 15692 / DSM 22644 / CIP 104116 / JCM 14847 / LMG 12228 / 1C / PRS 101 / PAO1).